The sequence spans 210 residues: Uracil phosphoribosyltransferase (210 aa).

5-phospho-alpha-D-ribose 1-diphosphate is bound by residues Arg-80, Arg-105, and 132-140 (DPMLATGGS). Residues Ile-195 and 200–202 (GDA) each bind uracil. Asp-201 is a binding site for 5-phospho-alpha-D-ribose 1-diphosphate.

This sequence belongs to the UPRTase family. Requires Mg(2+) as cofactor.

The enzyme catalyses UMP + diphosphate = 5-phospho-alpha-D-ribose 1-diphosphate + uracil. The protein operates within pyrimidine metabolism; UMP biosynthesis via salvage pathway; UMP from uracil: step 1/1. Its activity is regulated as follows. Allosterically activated by GTP. Its function is as follows. Catalyzes the conversion of uracil and 5-phospho-alpha-D-ribose 1-diphosphate (PRPP) to UMP and diphosphate. The sequence is that of Uracil phosphoribosyltransferase from Thermoanaerobacter pseudethanolicus (strain ATCC 33223 / 39E) (Clostridium thermohydrosulfuricum).